We begin with the raw amino-acid sequence, 226 residues long: ATP synthase F(0) complex subunit a (226 aa).

The next 5 helical transmembrane spans lie at 9-29, 68-88, 97-117, 138-158, and 184-204; these read FITP…FPSL, WTLM…LGLL, QLSM…ITGF, IPML…ALAV, and ISPT…ILEF.

This sequence belongs to the ATPase A chain family. In terms of assembly, component of the ATP synthase complex composed at least of ATP5F1A/subunit alpha, ATP5F1B/subunit beta, ATP5MC1/subunit c (homooctomer), MT-ATP6/subunit a, MT-ATP8/subunit 8, ATP5ME/subunit e, ATP5MF/subunit f, ATP5MG/subunit g, ATP5MK/subunit k, ATP5MJ/subunit j, ATP5F1C/subunit gamma, ATP5F1D/subunit delta, ATP5F1E/subunit epsilon, ATP5PF/subunit F6, ATP5PB/subunit b, ATP5PD/subunit d, ATP5PO/subunit OSCP. ATP synthase complex consists of a soluble F(1) head domain (subunits alpha(3) and beta(3)) - the catalytic core - and a membrane F(0) domain - the membrane proton channel (subunits c, a, 8, e, f, g, k and j). These two domains are linked by a central stalk (subunits gamma, delta, and epsilon) rotating inside the F1 region and a stationary peripheral stalk (subunits F6, b, d, and OSCP). Interacts with DNAJC30; interaction is direct.

The protein resides in the mitochondrion inner membrane. The enzyme catalyses H(+)(in) = H(+)(out). Functionally, subunit a, of the mitochondrial membrane ATP synthase complex (F(1)F(0) ATP synthase or Complex V) that produces ATP from ADP in the presence of a proton gradient across the membrane which is generated by electron transport complexes of the respiratory chain. ATP synthase complex consist of a soluble F(1) head domain - the catalytic core - and a membrane F(1) domain - the membrane proton channel. These two domains are linked by a central stalk rotating inside the F(1) region and a stationary peripheral stalk. During catalysis, ATP synthesis in the catalytic domain of F(1) is coupled via a rotary mechanism of the central stalk subunits to proton translocation. With the subunit c (ATP5MC1), forms the proton-conducting channel in the F(0) domain, that contains two crucial half-channels (inlet and outlet) that facilitate proton movement from the mitochondrial intermembrane space (IMS) into the matrix. Protons are taken up via the inlet half-channel and released through the outlet half-channel, following a Grotthuss mechanism. The chain is ATP synthase F(0) complex subunit a from Capra hircus (Goat).